The following is a 240-amino-acid chain: Protein GUCD1 (240 aa).

The sequence is that of Protein GUCD1 (GUCD1) from Homo sapiens (Human).